The following is a 351-amino-acid chain: Photosystem II D2 protein (351 aa).

A helical transmembrane segment spans residues 39–59 (CAYMAIGGWLTGTTFATSWYT). Residue His116 participates in chlorophyll a binding. A helical transmembrane segment spans residues 123–139 (GFMLRQFEIARLVGVRP). Pheophytin a is bound by residues Gln128 and Asn141. A helical transmembrane segment spans residues 151–164 (LFVSVFLIYPLGQS). His196 is a chlorophyll a binding site. A helical membrane pass occupies residues 206–226 (GALLCAIHGATVENTLFEDGD). His213 and Phe260 together coordinate a plastoquinone. His213 contributes to the Fe cation binding site. His267 provides a ligand contact to Fe cation. The chain crosses the membrane as a helical span at residues 277–293 (GLWMSAIGVVGLALNLR).

Belongs to the reaction center PufL/M/PsbA/D family. In terms of assembly, PSII is composed of 1 copy each of membrane proteins PsbA, PsbB, PsbC, PsbD, PsbE, PsbF, PsbH, PsbI, PsbJ, PsbK, PsbL, PsbM, PsbT, PsbX, PsbY, PsbZ, Psb30/Ycf12, peripheral proteins PsbO, CyanoQ (PsbQ), PsbU, PsbV and a large number of cofactors. It forms dimeric complexes. The cofactor is The D1/D2 heterodimer binds P680, chlorophylls that are the primary electron donor of PSII, and subsequent electron acceptors. It shares a non-heme iron and each subunit binds pheophytin, quinone, additional chlorophylls, carotenoids and lipids. There is also a Cl(-1) ion associated with D1 and D2, which is required for oxygen evolution. The PSII complex binds additional chlorophylls, carotenoids and specific lipids..

Its subcellular location is the cellular thylakoid membrane. The enzyme catalyses 2 a plastoquinone + 4 hnu + 2 H2O = 2 a plastoquinol + O2. Its function is as follows. Photosystem II (PSII) is a light-driven water:plastoquinone oxidoreductase that uses light energy to abstract electrons from H(2)O, generating O(2) and a proton gradient subsequently used for ATP formation. It consists of a core antenna complex that captures photons, and an electron transfer chain that converts photonic excitation into a charge separation. The D1/D2 (PsbA/PsbD) reaction center heterodimer binds P680, the primary electron donor of PSII as well as several subsequent electron acceptors. D2 is needed for assembly of a stable PSII complex. This is Photosystem II D2 protein from Prochlorothrix hollandica.